A 217-amino-acid chain; its full sequence is Ependymin (217 aa).

A signal peptide spans 1-20 (MHTVKLLCVVFSCLCAIGWA). Residues Asn73 and Asn96 are each glycosylated (N-linked (GlcNAc...) asparagine).

The protein belongs to the ependymin family. Forms disulfide-linked dimers. Post-translationally, binds calcium through the terminal sialic acids. In terms of tissue distribution, EPDs are synthesized in the meninx and secreted in the cerebrospinal fluid.

Its subcellular location is the secreted. May play a role in neural plasticity. May be involved during axon regeneration. The sequence is that of Ependymin (epd) from Danio rerio (Zebrafish).